Reading from the N-terminus, the 357-residue chain is NAD kinase 1 (357 aa).

D68 functions as the Proton acceptor in the catalytic mechanism. NAD(+)-binding positions include 68–69 (DG), R73, 175–176 (ND), R186, D205, A240, and Q275.

It belongs to the NAD kinase family. The cofactor is a divalent metal cation.

It is found in the cytoplasm. It catalyses the reaction NAD(+) + ATP = ADP + NADP(+) + H(+). Involved in the regulation of the intracellular balance of NAD and NADP, and is a key enzyme in the biosynthesis of NADP. Catalyzes specifically the phosphorylation on 2'-hydroxyl of the adenosine moiety of NAD to yield NADP. The polypeptide is NAD kinase 1 (Streptomyces avermitilis (strain ATCC 31267 / DSM 46492 / JCM 5070 / NBRC 14893 / NCIMB 12804 / NRRL 8165 / MA-4680)).